Consider the following 566-residue polypeptide: OTU domain-containing protein 5 (566 aa).

Disordered stretches follow at residues 1-117 (MTIL…GDAL) and 145-175 (GPGHSKRRRQAPGVGAVGGASPEREEVGAGY). Over residues 11 to 30 (PPDADPANEPPPPGPLPPAP) the composition is skewed to pro residues. A compositionally biased stretch (gly residues) spans 34-47 (AGVGVGGGGTGVGG). Residues 63–75 (ASPPPQGPLPGPP) are compositionally biased toward pro residues. Ser64 is subject to Phosphoserine. Residues 84–97 (AVPPGAVAGPRPQQ) are compositionally biased toward low complexity. The span at 105–115 (GPGGPGGGPGD) shows a compositional bias: gly residues. Residue Ser165 is modified to Phosphoserine. Tyr175 is subject to Phosphotyrosine. Position 177 is a phosphoserine (Ser177). At Thr195 the chain carries Phosphothreonine. One can recognise an OTU domain in the interval 213 to 336 (FIIKQMKEDG…NIHYNSVVNP (124 aa)). The cys-loop stretch occupies residues 218-224 (MKEDGAC). The active site involves Asp221. Catalysis depends on Cys224, which acts as the Nucleophile. The segment at 273 to 283 (KRKNNCHGNHI) is variable-loop. At Ser323 the chain carries Phosphoserine. The segment at 324–329 (YHRNIH) is his-loop. His329 is a catalytic residue. A phosphoserine mark is found at Ser332 and Ser370. A disordered region spans residues 413-499 (ARQVRGPSQP…TSSQFSAGGD (87 aa)). Composition is skewed to low complexity over residues 425–438 (ASATCSSATAAASS) and 445–457 (SRSPRQRSSASSP). A Phosphoserine modification is found at Ser447. Thr502 is subject to Phosphothreonine. A Phosphoserine modification is found at Ser503.

The protein belongs to the peptidase C85 family. In terms of assembly, interacts with TRAF3. Post-translationally, phosphorylation at Ser-177 is required for deubiquitinating activity. Phosphorylation at Ser-323, Ser-332 and Ser-503 by MTOR promotes its activity.

The protein localises to the nucleus. The catalysed reaction is Thiol-dependent hydrolysis of ester, thioester, amide, peptide and isopeptide bonds formed by the C-terminal Gly of ubiquitin (a 76-residue protein attached to proteins as an intracellular targeting signal).. With respect to regulation, inhibited by N-ethyl-maleimide (NEM). Functionally, deubiquitinating enzyme that functions as a negative regulator of the innate immune system. Has peptidase activity towards 'Lys-48'- and 'Lys-63'-linked polyubiquitin chains. Can also cleave 'Lys-11'-linked ubiquitin chains (in vitro). Acts via TRAF3 deubiquitination and subsequent suppression of type I interferon (IFN) production. Controls neuroectodermal differentiation through cleaving 'Lys-48'-linked ubiquitin chains to counteract degradation of select chromatin regulators such as ARID1A, HDAC2 and HCF1. Acts as a positive regulator of mTORC1 and mTORC2 signaling following phosphorylation by MTOR: acts by mediating deubiquitination of BTRC, leading to its stability. The chain is OTU domain-containing protein 5 from Mus musculus (Mouse).